The chain runs to 593 residues: Maternal uncoordinated protein 2 (593 aa).

The protein belongs to the SCC4/mau-2 family. As to quaternary structure, may heterodimerize with scc-2/SCC2 to form the cohesin loading complex.

Its subcellular location is the nucleus. The protein resides in the nucleoplasm. The protein localises to the cytoplasm. Its function is as follows. Plays an important role in the loading of the cohesin complex on to DNA. Forms a heterodimeric complex (also known as cohesin loading complex) with scc-2/SCC2 which mediates the loading of the cohesin complex onto chromatin. Required for normal development until the fourth larval stage. Functions cell autonomously to guide migrations during the development of the nervous system. Participates in the guidance of mechanosensory neuron AVM by a slt-1-independent mechanism. Regulates chromosome segregation in early embryos. The chain is Maternal uncoordinated protein 2 from Caenorhabditis elegans.